The chain runs to 474 residues: Glutamate--tRNA ligase (474 aa).

Residues 9–19 (PSPTGLLHMGG) carry the 'HIGH' region motif. The 'KMSKS' region signature appears at 238–242 (KLSKR). Lys-241 lines the ATP pocket.

This sequence belongs to the class-I aminoacyl-tRNA synthetase family. Glutamate--tRNA ligase type 1 subfamily. Monomer.

The protein localises to the cytoplasm. It catalyses the reaction tRNA(Glu) + L-glutamate + ATP = L-glutamyl-tRNA(Glu) + AMP + diphosphate. Its function is as follows. Catalyzes the attachment of glutamate to tRNA(Glu) in a two-step reaction: glutamate is first activated by ATP to form Glu-AMP and then transferred to the acceptor end of tRNA(Glu). The protein is Glutamate--tRNA ligase of Buchnera aphidicola subsp. Cinara cedri (strain Cc).